A 968-amino-acid polypeptide reads, in one-letter code: RNA polymerase-associated protein RapA (968 aa).

The 171-residue stretch at 164-334 (DVGRRHAPRV…FARLRLLDPN (171 aa)) folds into the Helicase ATP-binding domain. 177–184 (DEVGLGKT) contacts ATP. A DEAH box motif is present at residues 280-283 (DEAH). The 155-residue stretch at 490-644 (RVEWLMGYLT…TCPTGRTVYD (155 aa)) folds into the Helicase C-terminal domain.

Belongs to the SNF2/RAD54 helicase family. RapA subfamily. In terms of assembly, interacts with the RNAP. Has a higher affinity for the core RNAP than for the holoenzyme. Its ATPase activity is stimulated by binding to RNAP.

Transcription regulator that activates transcription by stimulating RNA polymerase (RNAP) recycling in case of stress conditions such as supercoiled DNA or high salt concentrations. Probably acts by releasing the RNAP, when it is trapped or immobilized on tightly supercoiled DNA. Does not activate transcription on linear DNA. Probably not involved in DNA repair. This chain is RNA polymerase-associated protein RapA, found in Klebsiella pneumoniae (strain 342).